The primary structure comprises 196 residues: dTTP/UTP pyrophosphatase (196 aa).

Aspartate 78 acts as the Proton acceptor in catalysis.

It belongs to the Maf family. YhdE subfamily. Requires a divalent metal cation as cofactor.

The protein localises to the cytoplasm. It carries out the reaction dTTP + H2O = dTMP + diphosphate + H(+). It catalyses the reaction UTP + H2O = UMP + diphosphate + H(+). Nucleoside triphosphate pyrophosphatase that hydrolyzes dTTP and UTP. May have a dual role in cell division arrest and in preventing the incorporation of modified nucleotides into cellular nucleic acids. The chain is dTTP/UTP pyrophosphatase from Photobacterium profundum (strain SS9).